The primary structure comprises 155 residues: UPF0178 protein mlr0875 (155 aa).

Belongs to the UPF0178 family.

The protein is UPF0178 protein mlr0875 of Mesorhizobium japonicum (strain LMG 29417 / CECT 9101 / MAFF 303099) (Mesorhizobium loti (strain MAFF 303099)).